Reading from the N-terminus, the 222-residue chain is Peptide methionine sulfoxide reductase MsrA 2 (222 aa).

Cys-56 is a catalytic residue.

It belongs to the MsrA Met sulfoxide reductase family.

It catalyses the reaction L-methionyl-[protein] + [thioredoxin]-disulfide + H2O = L-methionyl-(S)-S-oxide-[protein] + [thioredoxin]-dithiol. The enzyme catalyses [thioredoxin]-disulfide + L-methionine + H2O = L-methionine (S)-S-oxide + [thioredoxin]-dithiol. Has an important function as a repair enzyme for proteins that have been inactivated by oxidation. Catalyzes the reversible oxidation-reduction of methionine sulfoxide in proteins to methionine. This chain is Peptide methionine sulfoxide reductase MsrA 2 (msrA2), found in Nostoc sp. (strain PCC 7120 / SAG 25.82 / UTEX 2576).